The sequence spans 216 residues: Probable succinyl-CoA:3-ketoacid coenzyme A transferase subunit B (216 aa).

Glu47 is an active-site residue.

The protein belongs to the 3-oxoacid CoA-transferase subunit B family. In terms of assembly, heterodimer of a subunit A and a subunit B.

The catalysed reaction is a 3-oxo acid + succinyl-CoA = a 3-oxoacyl-CoA + succinate. This chain is Probable succinyl-CoA:3-ketoacid coenzyme A transferase subunit B (scoB), found in Bacillus subtilis (strain 168).